The sequence spans 418 residues: Light-independent protochlorophyllide reductase subunit N (418 aa).

[4Fe-4S] cluster-binding residues include C17, C42, and C103.

Belongs to the BchN/ChlN family. As to quaternary structure, protochlorophyllide reductase is composed of three subunits; ChlL, ChlN and ChlB. Forms a heterotetramer of two ChlB and two ChlN subunits. [4Fe-4S] cluster serves as cofactor.

The enzyme catalyses chlorophyllide a + oxidized 2[4Fe-4S]-[ferredoxin] + 2 ADP + 2 phosphate = protochlorophyllide a + reduced 2[4Fe-4S]-[ferredoxin] + 2 ATP + 2 H2O. It functions in the pathway porphyrin-containing compound metabolism; chlorophyll biosynthesis (light-independent). Component of the dark-operative protochlorophyllide reductase (DPOR) that uses Mg-ATP and reduced ferredoxin to reduce ring D of protochlorophyllide (Pchlide) to form chlorophyllide a (Chlide). This reaction is light-independent. The NB-protein (ChlN-ChlB) is the catalytic component of the complex. The polypeptide is Light-independent protochlorophyllide reductase subunit N (Prochlorococcus marinus (strain AS9601)).